The following is a 286-amino-acid chain: Bifunctional protein FolD (286 aa).

NADP(+)-binding positions include 165 to 167 (GRS) and Ser190.

This sequence belongs to the tetrahydrofolate dehydrogenase/cyclohydrolase family. As to quaternary structure, homodimer.

The catalysed reaction is (6R)-5,10-methylene-5,6,7,8-tetrahydrofolate + NADP(+) = (6R)-5,10-methenyltetrahydrofolate + NADPH. The enzyme catalyses (6R)-5,10-methenyltetrahydrofolate + H2O = (6R)-10-formyltetrahydrofolate + H(+). The protein operates within one-carbon metabolism; tetrahydrofolate interconversion. Its function is as follows. Catalyzes the oxidation of 5,10-methylenetetrahydrofolate to 5,10-methenyltetrahydrofolate and then the hydrolysis of 5,10-methenyltetrahydrofolate to 10-formyltetrahydrofolate. This Burkholderia lata (strain ATCC 17760 / DSM 23089 / LMG 22485 / NCIMB 9086 / R18194 / 383) protein is Bifunctional protein FolD.